Consider the following 119-residue polypeptide: MTRVPRGYIARRRRTKMRSFASNFRGAHLRLNRMITQQVRRAFVSSHRDRGRQKRDFRRLWITRINAATRVYNVFNSYSKLIHNLSKKELILNRKMLAQVAVLNPNNLYTISNKIRTIN.

Belongs to the bacterial ribosomal protein bL20 family.

It is found in the plastid. The protein resides in the chloroplast. Binds directly to 23S ribosomal RNA and is necessary for the in vitro assembly process of the 50S ribosomal subunit. It is not involved in the protein synthesizing functions of that subunit. The chain is Large ribosomal subunit protein bL20c from Saccharum hybrid (Sugarcane).